The following is a 1296-amino-acid chain: Nuclear factor related to kappa-B-binding protein (1296 aa).

A DEUBAD domain is found at P39–D156. 2 disordered regions span residues G165–W186 and G204–P232. Positions S216–P232 are enriched in low complexity. Residues S228 and S298 each carry the phosphoserine modification. A Glycyl lysine isopeptide (Lys-Gly) (interchain with G-Cter in SUMO2) cross-link involves residue K327. S351 carries the post-translational modification Phosphoserine. Residues L370–D495 form a winged-helix like domain region. Residue K469 forms a Glycyl lysine isopeptide (Lys-Gly) (interchain with G-Cter in SUMO2) linkage. K488 participates in a covalent cross-link: Glycyl lysine isopeptide (Lys-Gly) (interchain with G-Cter in SUMO1); alternate. A Glycyl lysine isopeptide (Lys-Gly) (interchain with G-Cter in SUMO2); alternate cross-link involves residue K488. Disordered stretches follow at residues Q663–V758 and H1015–T1036. Low complexity predominate over residues P700 to M713. Positions P726–V737 are enriched in pro residues. The span at N741–V758 shows a compositional bias: polar residues. Residues A1016–A1034 show a composition bias toward low complexity. The residue at position 1019 (S1019) is a Phosphoserine. K1234 is subject to N6-acetyllysine. S1288 carries the phosphoserine modification.

It belongs to the NFRKB family. As to quaternary structure, component of the chromatin remodeling INO80 complex; specifically part of a complex module associated with the N-terminus of INO80. Interacts with UCHL5.

The protein resides in the nucleus. Functionally, binds to the DNA consensus sequence 5'-GGGGAATCTCC-3'. Its function is as follows. Putative regulatory component of the chromatin remodeling INO80 complex which is involved in transcriptional regulation, DNA replication and probably DNA repair. Modulates the deubiquitinase activity of UCHL5 in the INO80 complex. This chain is Nuclear factor related to kappa-B-binding protein (Nfrkb), found in Mus musculus (Mouse).